The primary structure comprises 916 residues: Protein translocase subunit SecA (916 aa).

Residues Gln87, 105-109 (GEGKT), and Asp507 each bind ATP. The Zn(2+) site is built by Cys900, Cys902, Cys911, and His912.

This sequence belongs to the SecA family. Monomer and homodimer. Part of the essential Sec protein translocation apparatus which comprises SecA, SecYEG and auxiliary proteins SecDF-YajC and YidC. The cofactor is Zn(2+).

The protein resides in the cell inner membrane. It localises to the cytoplasm. It catalyses the reaction ATP + H2O + cellular proteinSide 1 = ADP + phosphate + cellular proteinSide 2.. Part of the Sec protein translocase complex. Interacts with the SecYEG preprotein conducting channel. Has a central role in coupling the hydrolysis of ATP to the transfer of proteins into and across the cell membrane, serving both as a receptor for the preprotein-SecB complex and as an ATP-driven molecular motor driving the stepwise translocation of polypeptide chains across the membrane. In Neisseria meningitidis serogroup C (strain 053442), this protein is Protein translocase subunit SecA.